We begin with the raw amino-acid sequence, 324 residues long: Phospho-N-acetylmuramoyl-pentapeptide-transferase (324 aa).

10 helical membrane-spanning segments follow: residues 5 to 25 (VILFTIIMGFLISVLLSPIFI), 52 to 72 (PTMGGVMIILSIIATTIVMTM), 77 to 97 (VSMNMILLLFVTVGYGLLGFL), 117 to 137 (LIGQIVIALVFYAVYHFQGMP), 147 to 167 (LSFDFGWIYPVLVIFMLVGGS), 176 to 196 (LDGLLSGTAAIAFGAFAILAW), 203 to 223 (VAIFAVAVVGAVLGFLVFNAH), 227 to 247 (VFMGDTGSLALGGAIVTIAIL), 250 to 270 (LEILLVIIGGVFVIETLSVIL), and 302 to 322 (VVVTFWTAGLLLAVLGIYIEV).

This sequence belongs to the glycosyltransferase 4 family. MraY subfamily. Mg(2+) serves as cofactor.

Its subcellular location is the cell membrane. It carries out the reaction UDP-N-acetyl-alpha-D-muramoyl-L-alanyl-gamma-D-glutamyl-meso-2,6-diaminopimeloyl-D-alanyl-D-alanine + di-trans,octa-cis-undecaprenyl phosphate = di-trans,octa-cis-undecaprenyl diphospho-N-acetyl-alpha-D-muramoyl-L-alanyl-D-glutamyl-meso-2,6-diaminopimeloyl-D-alanyl-D-alanine + UMP. Its pathway is cell wall biogenesis; peptidoglycan biosynthesis. Its function is as follows. Catalyzes the initial step of the lipid cycle reactions in the biosynthesis of the cell wall peptidoglycan: transfers peptidoglycan precursor phospho-MurNAc-pentapeptide from UDP-MurNAc-pentapeptide onto the lipid carrier undecaprenyl phosphate, yielding undecaprenyl-pyrophosphoryl-MurNAc-pentapeptide, known as lipid I. This is Phospho-N-acetylmuramoyl-pentapeptide-transferase from Bacillus licheniformis (strain ATCC 14580 / DSM 13 / JCM 2505 / CCUG 7422 / NBRC 12200 / NCIMB 9375 / NCTC 10341 / NRRL NRS-1264 / Gibson 46).